The following is a 152-amino-acid chain: Peptide deformylase (152 aa).

Cysteine 91 and histidine 133 together coordinate Fe cation. The active site involves glutamate 134. A Fe cation-binding site is contributed by histidine 137.

Belongs to the polypeptide deformylase family. Fe(2+) is required as a cofactor.

The catalysed reaction is N-terminal N-formyl-L-methionyl-[peptide] + H2O = N-terminal L-methionyl-[peptide] + formate. Functionally, removes the formyl group from the N-terminal Met of newly synthesized proteins. Requires at least a dipeptide for an efficient rate of reaction. N-terminal L-methionine is a prerequisite for activity but the enzyme has broad specificity at other positions. This is Peptide deformylase from Wigglesworthia glossinidia brevipalpis.